Reading from the N-terminus, the 191-residue chain is Small ribosomal subunit protein uS5 (191 aa).

The 64-residue stretch at 21–84 folds into the S5 DRBM domain; sequence FADRLVAINR…EQAKRQMIRV (64 aa). The interval 155 to 191 is disordered; sequence LRKESSPRSVAQRRGKKVADILPKVDAAPAPAETAEA. Residues 181 to 191 are compositionally biased toward low complexity; sequence AAPAPAETAEA.

Belongs to the universal ribosomal protein uS5 family. In terms of assembly, part of the 30S ribosomal subunit. Contacts proteins S4 and S8.

With S4 and S12 plays an important role in translational accuracy. In terms of biological role, located at the back of the 30S subunit body where it stabilizes the conformation of the head with respect to the body. This chain is Small ribosomal subunit protein uS5, found in Roseobacter denitrificans (strain ATCC 33942 / OCh 114) (Erythrobacter sp. (strain OCh 114)).